The following is a 610-amino-acid chain: Alpha-fetoprotein (610 aa).

The N-terminal stretch at 1–18 (MKWVVSFFLLFLLNFSDS) is a signal peptide. 3 Albumin domains span residues 19–210 (RTMH…TSIT), 211–403 (KELR…EELE), and 404–602 (KYIQ…ALIS). His22 contributes to the Cu(2+) binding site. Disulfide bonds link Cys99/Cys114, Cys113/Cys124, Cys148/Cys193, Cys192/Cys201, Cys224/Cys270, Cys269/Cys277, Cys289/Cys303, and Cys302/Cys314. Phosphoserine occurs at positions 111 and 115. N-linked (GlcNAc...) asparagine glycans are attached at residues Asn197 and Asn251. The residue at position 345 (Ser345) is a Phosphoserine. Intrachain disulfides connect Cys385–Cys394, Cys417–Cys463, Cys462–Cys473, Cys486–Cys502, Cys501–Cys512, Cys539–Cys584, and Cys583–Cys592. Ser445 is subject to Phosphoserine.

This sequence belongs to the ALB/AFP/VDB family. Dimeric and trimeric forms have been found in addition to the monomeric form. Post-translationally, sulfated. As to expression, plasma.

The protein localises to the secreted. Functionally, binds copper, nickel, and fatty acids as well as, and bilirubin less well than, serum albumin. The polypeptide is Alpha-fetoprotein (AFP) (Bos taurus (Bovine)).